The sequence spans 513 residues: GMP synthase [glutamine-hydrolyzing] (513 aa).

The region spanning 8 to 198 (MILVLDFGSQ…VFGVCECVGE (191 aa)) is the Glutamine amidotransferase type-1 domain. Catalysis depends on C85, which acts as the Nucleophile. Catalysis depends on residues H172 and E174. Positions 199-388 (WSMENFIEIE…LGIPDEIVWR (190 aa)) constitute a GMPS ATP-PPase domain. ATP is bound at residue 226–232 (SGGVDSS).

Homodimer.

It catalyses the reaction XMP + L-glutamine + ATP + H2O = GMP + L-glutamate + AMP + diphosphate + 2 H(+). The protein operates within purine metabolism; GMP biosynthesis; GMP from XMP (L-Gln route): step 1/1. In terms of biological role, catalyzes the synthesis of GMP from XMP. This is GMP synthase [glutamine-hydrolyzing] from Bacillus licheniformis (strain ATCC 14580 / DSM 13 / JCM 2505 / CCUG 7422 / NBRC 12200 / NCIMB 9375 / NCTC 10341 / NRRL NRS-1264 / Gibson 46).